A 356-amino-acid polypeptide reads, in one-letter code: Tyrosine recombinase XerS (356 aa).

One can recognise a Core-binding (CB) domain in the interval 16 to 121; sequence IMPWYVLDYY…ALSSLYKYLT (106 aa). Positions 169-354 constitute a Tyr recombinase domain; the sequence is AFLDYVDKEY…VNDEQKNALD (186 aa). Active-site residues include Arg-210, Lys-234, His-306, Arg-309, and His-332. Tyr-341 acts as the O-(3'-phospho-DNA)-tyrosine intermediate in catalysis.

The protein belongs to the 'phage' integrase family. XerS subfamily.

Its subcellular location is the cytoplasm. With respect to regulation, ftsK is required for recombination. Its function is as follows. Site-specific tyrosine recombinase, which acts by catalyzing the cutting and rejoining of the recombining DNA molecules. Essential to convert dimers of the bacterial chromosome into monomers to permit their segregation at cell division. The chain is Tyrosine recombinase XerS from Streptococcus equi subsp. zooepidemicus (strain H70).